Here is a 391-residue protein sequence, read N- to C-terminus: NADH-quinone oxidoreductase subunit D (391 aa).

Belongs to the complex I 49 kDa subunit family. As to quaternary structure, NDH-1 is composed of 14 different subunits. Subunits NuoB, C, D, E, F, and G constitute the peripheral sector of the complex.

Its subcellular location is the cell inner membrane. The catalysed reaction is a quinone + NADH + 5 H(+)(in) = a quinol + NAD(+) + 4 H(+)(out). NDH-1 shuttles electrons from NADH, via FMN and iron-sulfur (Fe-S) centers, to quinones in the respiratory chain. The immediate electron acceptor for the enzyme in this species is believed to be ubiquinone. Couples the redox reaction to proton translocation (for every two electrons transferred, four hydrogen ions are translocated across the cytoplasmic membrane), and thus conserves the redox energy in a proton gradient. The polypeptide is NADH-quinone oxidoreductase subunit D (Rickettsia conorii (strain ATCC VR-613 / Malish 7)).